The sequence spans 90 residues: Electron transfer flavoprotein regulatory factor 1 (90 aa).

It belongs to the complex I LYR family. Homotetramer. Interacts with NDUFAB1. Interacts with ETFA. Interacts with ETFB.

Its subcellular location is the mitochondrion. Its function is as follows. Acts as a regulator of the electron transfer flavoprotein by promoting the removal of flavin from the ETF holoenzyme (composed of ETFA and ETFB). The polypeptide is Electron transfer flavoprotein regulatory factor 1 (Homo sapiens (Human)).